Reading from the N-terminus, the 346-residue chain is Glycosyltransferase 1 domain-containing protein 1 (346 aa).

The first 16 residues, Met-1–Ala-16, serve as a signal peptide directing secretion.

It belongs to the glycosyltransferase group 1 family. Glycosyltransferase 4 subfamily.

It is found in the secreted. This is Glycosyltransferase 1 domain-containing protein 1 (GLT1D1) from Pongo abelii (Sumatran orangutan).